A 52-amino-acid polypeptide reads, in one-letter code: Proteinase inhibitor PSI-1.2 (52 aa).

Cystine bridges form between Cys3-Cys32, Cys7-Cys28, Cys16-Cys38, and Cys31-Cys49.

Potent inhibitor of trypsin and a weaker inhibitor of chymotrypsin. It does not inhibit elastase and subtilisin DY. This chain is Proteinase inhibitor PSI-1.2, found in Capsicum annuum (Capsicum pepper).